A 202-amino-acid polypeptide reads, in one-letter code: dTTP/UTP pyrophosphatase (202 aa).

Residue D83 is the Proton acceptor of the active site.

The protein belongs to the Maf family. YhdE subfamily. A divalent metal cation is required as a cofactor.

The protein resides in the cytoplasm. It catalyses the reaction dTTP + H2O = dTMP + diphosphate + H(+). The enzyme catalyses UTP + H2O = UMP + diphosphate + H(+). Functionally, nucleoside triphosphate pyrophosphatase that hydrolyzes dTTP and UTP. May have a dual role in cell division arrest and in preventing the incorporation of modified nucleotides into cellular nucleic acids. In Polaromonas sp. (strain JS666 / ATCC BAA-500), this protein is dTTP/UTP pyrophosphatase.